The following is a 78-amino-acid chain: Short neurotoxin 342 (78 aa).

The signal sequence occupies residues 1-21 (MKTLLLTLVVLTIVCLDLGYT). Cystine bridges form between Cys24-Cys43, Cys38-Cys57, Cys59-Cys70, and Cys71-Cys76.

The protein belongs to the three-finger toxin family. Short-chain subfamily. Type I alpha-neurotoxin sub-subfamily. Expressed by the venom gland.

The protein localises to the secreted. Binds to muscle nicotinic acetylcholine receptor (nAChR) and inhibit acetylcholine from binding to the receptor, thereby impairing neuromuscular transmission. The protein is Short neurotoxin 342 of Drysdalia coronoides (White-lipped snake).